Consider the following 281-residue polypeptide: Probable endonuclease 4 (281 aa).

Zn(2+)-binding residues include His69, His109, Glu145, Asp179, His182, His216, Asp229, His231, and Glu261.

This sequence belongs to the AP endonuclease 2 family. Requires Zn(2+) as cofactor.

The enzyme catalyses Endonucleolytic cleavage to 5'-phosphooligonucleotide end-products.. Functionally, endonuclease IV plays a role in DNA repair. It cleaves phosphodiester bonds at apurinic or apyrimidinic (AP) sites, generating a 3'-hydroxyl group and a 5'-terminal sugar phosphate. The polypeptide is Probable endonuclease 4 (Yersinia enterocolitica serotype O:8 / biotype 1B (strain NCTC 13174 / 8081)).